Reading from the N-terminus, the 319-residue chain is Acetyl-coenzyme A carboxylase carboxyl transferase subunit alpha (319 aa).

The CoA carboxyltransferase C-terminal domain occupies 39 to 293 (RLQKKSNDLT…KAVLEKQLHE (255 aa)).

This sequence belongs to the AccA family. As to quaternary structure, acetyl-CoA carboxylase is a heterohexamer composed of biotin carboxyl carrier protein (AccB), biotin carboxylase (AccC) and two subunits each of ACCase subunit alpha (AccA) and ACCase subunit beta (AccD).

Its subcellular location is the cytoplasm. The enzyme catalyses N(6)-carboxybiotinyl-L-lysyl-[protein] + acetyl-CoA = N(6)-biotinyl-L-lysyl-[protein] + malonyl-CoA. The protein operates within lipid metabolism; malonyl-CoA biosynthesis; malonyl-CoA from acetyl-CoA: step 1/1. Its function is as follows. Component of the acetyl coenzyme A carboxylase (ACC) complex. First, biotin carboxylase catalyzes the carboxylation of biotin on its carrier protein (BCCP) and then the CO(2) group is transferred by the carboxyltransferase to acetyl-CoA to form malonyl-CoA. The chain is Acetyl-coenzyme A carboxylase carboxyl transferase subunit alpha from Neisseria meningitidis serogroup B (strain ATCC BAA-335 / MC58).